The following is a 43-amino-acid chain: Protein PsbN (43 aa).

A helical transmembrane segment spans residues 5-27 (TLIAIFISCSLVSFTGYALYTAF).

This sequence belongs to the PsbN family.

It localises to the plastid. The protein localises to the chloroplast thylakoid membrane. In terms of biological role, may play a role in photosystem I and II biogenesis. This chain is Protein PsbN, found in Lopidium concinnum (Moss).